The chain runs to 239 residues: tRNA (guanine-N(1)-)-methyltransferase (239 aa).

S-adenosyl-L-methionine contacts are provided by residues Gly-112 and 132–137 (IGDYVL).

Belongs to the RNA methyltransferase TrmD family. As to quaternary structure, homodimer.

The protein localises to the cytoplasm. The enzyme catalyses guanosine(37) in tRNA + S-adenosyl-L-methionine = N(1)-methylguanosine(37) in tRNA + S-adenosyl-L-homocysteine + H(+). Specifically methylates guanosine-37 in various tRNAs. This is tRNA (guanine-N(1)-)-methyltransferase from Rhodospirillum rubrum (strain ATCC 11170 / ATH 1.1.1 / DSM 467 / LMG 4362 / NCIMB 8255 / S1).